We begin with the raw amino-acid sequence, 340 residues long: tRNA N6-adenosine threonylcarbamoyltransferase (340 aa).

Fe cation-binding residues include H111 and H115. Residues 134 to 138 (LVSGG), D167, G180, and N276 contribute to the substrate site. Residue D304 coordinates Fe cation.

This sequence belongs to the KAE1 / TsaD family. Requires Fe(2+) as cofactor.

The protein localises to the cytoplasm. The catalysed reaction is L-threonylcarbamoyladenylate + adenosine(37) in tRNA = N(6)-L-threonylcarbamoyladenosine(37) in tRNA + AMP + H(+). Functionally, required for the formation of a threonylcarbamoyl group on adenosine at position 37 (t(6)A37) in tRNAs that read codons beginning with adenine. Is involved in the transfer of the threonylcarbamoyl moiety of threonylcarbamoyl-AMP (TC-AMP) to the N6 group of A37, together with TsaE and TsaB. TsaD likely plays a direct catalytic role in this reaction. The sequence is that of tRNA N6-adenosine threonylcarbamoyltransferase from Helicobacter pylori (strain G27).